The following is a 525-amino-acid chain: NAD(P)H-quinone oxidoreductase subunit 2 (525 aa).

14 helical membrane-spanning segments follow: residues 14–34 (AIWP…VDLV), 42–62 (SLPA…VLQW), 78–98 (PVSI…VMMA), 117–137 (LTAT…MVFV), 167–187 (LLTG…LYGL), 201–221 (LANA…GIGF), 240–260 (PTPV…ALAI), 276–296 (AVLS…AIAQ), 302–322 (LLAY…VAGT), 330–350 (IFYL…VTLF), 374–394 (LCLS…GFFG), 396–416 (LYLF…VGLV), 462–482 (VGMV…NPLF), and 494–514 (FLGF…SLAV).

This sequence belongs to the complex I subunit 2 family. NDH-1 can be composed of about 15 different subunits; different subcomplexes with different compositions have been identified which probably have different functions.

The protein localises to the cellular thylakoid membrane. The catalysed reaction is a plastoquinone + NADH + (n+1) H(+)(in) = a plastoquinol + NAD(+) + n H(+)(out). It catalyses the reaction a plastoquinone + NADPH + (n+1) H(+)(in) = a plastoquinol + NADP(+) + n H(+)(out). NDH-1 shuttles electrons from an unknown electron donor, via FMN and iron-sulfur (Fe-S) centers, to quinones in the respiratory and/or the photosynthetic chain. The immediate electron acceptor for the enzyme in this species is believed to be plastoquinone. Couples the redox reaction to proton translocation, and thus conserves the redox energy in a proton gradient. Cyanobacterial NDH-1 also plays a role in inorganic carbon-concentration. In Synechococcus sp. (strain JA-3-3Ab) (Cyanobacteria bacterium Yellowstone A-Prime), this protein is NAD(P)H-quinone oxidoreductase subunit 2.